The following is a 449-amino-acid chain: Omega-amino acid--pyruvate aminotransferase (449 aa).

Trp-60 provides a ligand contact to substrate. 119-120 (GS) contributes to the pyridoxal 5'-phosphate binding site. Lys-288 is modified (N6-(pyridoxal phosphate)lysine). Thr-327 is a binding site for pyridoxal 5'-phosphate. Arg-414 and Gln-421 together coordinate substrate.

Belongs to the class-III pyridoxal-phosphate-dependent aminotransferase family. Homotetramer. It depends on pyridoxal 5'-phosphate as a cofactor.

It catalyses the reaction 3-oxopropanoate + L-alanine = beta-alanine + pyruvate. In terms of biological role, catalyzes transamination between a variety of omega-amino acids, mono and diamines, and pyruvate. Plays a pivotal role in the metabolism of the omega amino acids. In Pseudomonas putida (Arthrobacter siderocapsulatus), this protein is Omega-amino acid--pyruvate aminotransferase.